The sequence spans 395 residues: Probable hercynylcysteine sulfoxide lyase (395 aa).

Residues 1–21 (MQDEAMRRSGANSPAGDSLAD) form a disordered region. Residue lysine 220 is modified to N6-(pyridoxal phosphate)lysine.

This sequence belongs to the class-V pyridoxal-phosphate-dependent aminotransferase family. EgtE subfamily. Pyridoxal 5'-phosphate serves as cofactor.

The enzyme catalyses S-(hercyn-2-yl)-L-cysteine S-oxide + AH2 + H(+) = ergothioneine + pyruvate + A + NH4(+). It functions in the pathway amino-acid biosynthesis; ergothioneine biosynthesis. Functionally, probably catalyzes the conversion of hercynylcysteine sulfoxide to ergothioneine. ERG is one of the major redox buffers which protects bacteria against redox stressors and antibiotics; loss of ERG or mycothiol (MSH, the other major redox buffer in this bacteria) leads to respiratory alterations and bioenergetic deficiencies that negatively impact virulence. This chain is Probable hercynylcysteine sulfoxide lyase, found in Mycobacterium tuberculosis (strain CDC 1551 / Oshkosh).